The following is an 863-amino-acid chain: DNA mismatch repair protein MutS (863 aa).

615–622 (GPNMAGKS) lines the ATP pocket.

It belongs to the DNA mismatch repair MutS family.

In terms of biological role, this protein is involved in the repair of mismatches in DNA. It is possible that it carries out the mismatch recognition step. This protein has a weak ATPase activity. The chain is DNA mismatch repair protein MutS from Pelotomaculum thermopropionicum (strain DSM 13744 / JCM 10971 / SI).